A 538-amino-acid chain; its full sequence is CTP synthase (538 aa).

The amidoligase domain stretch occupies residues 1–266; the sequence is MKTKFIFVTG…DDQVVDKLNI (266 aa). Residue Ser-14 coordinates CTP. Ser-14 contacts UTP. Residues 15 to 20 and Asp-72 contribute to the ATP site; that span reads SIGKGL. Mg(2+) is bound by residues Asp-72 and Glu-140. CTP contacts are provided by residues 147 to 149, 187 to 192, and Lys-223; these read DIE and KTKPTQ. UTP contacts are provided by residues 187-192 and Lys-223; that span reads KTKPTQ. The Glutamine amidotransferase type-1 domain maps to 292–534; it reads HIAIVGKYVN…IAAALEHRGK (243 aa). Residue Gly-354 participates in L-glutamine binding. The active-site Nucleophile; for glutamine hydrolysis is Cys-381. L-glutamine-binding positions include 382–385, Glu-405, and Arg-462; that span reads LGMQ. Catalysis depends on residues His-507 and Glu-509.

It belongs to the CTP synthase family. In terms of assembly, homotetramer.

It catalyses the reaction UTP + L-glutamine + ATP + H2O = CTP + L-glutamate + ADP + phosphate + 2 H(+). It carries out the reaction L-glutamine + H2O = L-glutamate + NH4(+). The enzyme catalyses UTP + NH4(+) + ATP = CTP + ADP + phosphate + 2 H(+). It participates in pyrimidine metabolism; CTP biosynthesis via de novo pathway; CTP from UDP: step 2/2. Its activity is regulated as follows. Allosterically activated by GTP, when glutamine is the substrate; GTP has no effect on the reaction when ammonia is the substrate. The allosteric effector GTP functions by stabilizing the protein conformation that binds the tetrahedral intermediate(s) formed during glutamine hydrolysis. Inhibited by the product CTP, via allosteric rather than competitive inhibition. In terms of biological role, catalyzes the ATP-dependent amination of UTP to CTP with either L-glutamine or ammonia as the source of nitrogen. Regulates intracellular CTP levels through interactions with the four ribonucleotide triphosphates. This chain is CTP synthase, found in Geobacter metallireducens (strain ATCC 53774 / DSM 7210 / GS-15).